The primary structure comprises 394 residues: Elongation factor Tu (394 aa).

In terms of domain architecture, tr-type G spans 10–204; the sequence is KPHVNVGTIG…ALDSYIPTPE (195 aa). The tract at residues 19 to 26 is G1; the sequence is GHVDHGKT. 19–26 contacts GTP; it reads GHVDHGKT. A Mg(2+)-binding site is contributed by threonine 26. The tract at residues 60 to 64 is G2; that stretch reads GITIN. Residues 81–84 form a G3 region; sequence DCPG. Residues 81-85 and 136-139 each bind GTP; these read DCPGH and NKCD. A G4 region spans residues 136-139; that stretch reads NKCD. The tract at residues 174–176 is G5; sequence SAL.

This sequence belongs to the TRAFAC class translation factor GTPase superfamily. Classic translation factor GTPase family. EF-Tu/EF-1A subfamily. In terms of assembly, monomer.

The protein localises to the cytoplasm. The enzyme catalyses GTP + H2O = GDP + phosphate + H(+). Its function is as follows. GTP hydrolase that promotes the GTP-dependent binding of aminoacyl-tRNA to the A-site of ribosomes during protein biosynthesis. This is Elongation factor Tu from Neisseria gonorrhoeae (strain ATCC 700825 / FA 1090).